Here is a 151-residue protein sequence, read N- to C-terminus: KESAAAKFRRQHMDAGSSSSGNSNYCNQMMKRRRMTHGRCKPVNTFVHESLDSVKAVCSQKNITCKNGQPNCYQSNSTMNITDCRETGSSKYPNCAYKTSQKQKYITVACEGNPYVPVHFDGSVFLPATPLPSLPAPHKHRLLWLEGNNSS.

A disordered region spans residues 1–25 (KESAAAKFRRQHMDAGSSSSGNSNY). The substrate site is built by lysine 7 and arginine 10. Histidine 12 serves as the catalytic Proton acceptor. Disulfide bonds link cysteine 26–cysteine 84, cysteine 40–cysteine 95, cysteine 58–cysteine 110, and cysteine 65–cysteine 72. 41–45 (KPVNT) contacts substrate. N-linked (GlcNAc...) asparagine glycosylation occurs at asparagine 62. Lysine 66 and arginine 85 together coordinate substrate. Residue histidine 119 is the Proton donor of the active site. Residue threonine 129 is glycosylated (O-linked (GalNAc...) threonine). O-linked (GalNAc...) serine glycosylation is present at serine 133.

It belongs to the pancreatic ribonuclease family.

It is found in the secreted. The polypeptide is Brain ribonuclease (BRN) (Axis porcinus (Hog deer)).